Consider the following 286-residue polypeptide: uncharacterized protein (286 aa).

A signal peptide (tat-type signal) is located at residues 1-31 (MKKMSRRQFLKGMFGALAAGALTAGGGYGYA). 6 residues coordinate a divalent metal cation: Asp-65, His-67, Asp-97, Asn-130, His-221, and His-223.

The protein belongs to the metallophosphoesterase superfamily. A divalent metal cation serves as cofactor. Predicted to be exported by the Tat system. The position of the signal peptide cleavage has not been experimentally proven.

This is an uncharacterized protein from Bacillus subtilis (strain 168).